Consider the following 399-residue polypeptide: Phosphoglycerate kinase (399 aa).

Residues 22 to 24 (DFN), R38, 61 to 64 (HLGR), R120, and R153 each bind substrate. Residues K204, E326, and 352–355 (GGDT) contribute to the ATP site.

Belongs to the phosphoglycerate kinase family. As to quaternary structure, monomer.

The protein localises to the cytoplasm. It catalyses the reaction (2R)-3-phosphoglycerate + ATP = (2R)-3-phospho-glyceroyl phosphate + ADP. Its pathway is carbohydrate degradation; glycolysis; pyruvate from D-glyceraldehyde 3-phosphate: step 2/5. This Geotalea uraniireducens (strain Rf4) (Geobacter uraniireducens) protein is Phosphoglycerate kinase.